Consider the following 705-residue polypeptide: Phosphatidylinositol 4-phosphate 5-kinase 3 (705 aa).

MORN repeat units follow at residues 58–80 (YNGG…DGCM), 81–103 (YEGE…SGAT), 104–126 (YEGQ…DGDT), 127–149 (YRGH…NGDG), 150–172 (YQGN…DGNE), 173–195 (YVGE…NGNR), and 196–218 (YDGL…EEKT). The PIPK domain occupies 321–701 (TVTAGHKNYD…RFRDFINKIF (381 aa)). The interval 661 to 682 (YDITKKLEHAYKSLHADPASIS) is activation loop.

The protein localises to the cell membrane. The enzyme catalyses a 1,2-diacyl-sn-glycero-3-phospho-(1D-myo-inositol 4-phosphate) + ATP = a 1,2-diacyl-sn-glycero-3-phospho-(1D-myo-inositol-4,5-bisphosphate) + ADP + H(+). Its function is as follows. With DRP1A and DRP2B, required for the precise coordination of polar ARAC3/ROP6 and ARAC4/ROP2 placement and subsequent root hair positioning during planar polarity formation in root hair-forming cells, probably by mediating the correct basal-to-planar polarity switching of D6PK into the polar, lipid-enriched domain. The polypeptide is Phosphatidylinositol 4-phosphate 5-kinase 3 (Arabidopsis thaliana (Mouse-ear cress)).